A 270-amino-acid polypeptide reads, in one-letter code: Maximins-S type D (270 aa).

Residues 1–18 form the signal peptide; the sequence is MNFNYFILVLFFITSGHA. 2 propeptides span residues 19-35 and 52-65; these read KSET…HIKR and SAEE…LVTR. Asparagine 83 is subject to Asparagine amide. The propeptide occupies 87 to 100; sequence SAEEQDLAEDLVTR. Residue lysine 118 is modified to Lysine amide. Positions 122–135 are excised as a propeptide; that stretch reads SAEDQDLAEDLVTR. Asparagine 153 is subject to Asparagine amide. The propeptide occupies 157–170; that stretch reads SAEEQDLAEHLVTR. Asparagine 188 is modified (asparagine amide). Positions 192–205 are excised as a propeptide; that stretch reads SAEEQDLVEDLVTR. Lysine 223 bears the Lysine amide mark. Positions 227–240 are excised as a propeptide; sequence SAEEQDLAEDLVTR. Position 258 is a lysine amide (lysine 258). The propeptide occupies 262–270; it reads SAEQEKDMK.

The protein belongs to the maximin-S family. Expressed by the skin dorsal glands.

Its subcellular location is the secreted. Maximin-S1 has no antimicrobial activity. Has no hemolytic activity. In terms of biological role, maximin-S2 has an activity against mycoplasma but has no activity against common Gram-positive and Gram-negative bacteria nor fungi. Has no hemolytic activity. Functionally, maximin-S3 has an activity against mycoplasma but has no activity against common Gram-positive and Gram-negative bacteria nor fungi. Has no hemolytic activity. Its function is as follows. Maximin-S4 has an activity against mycoplasma but has no activity against common Gram-positive and Gram-negative bacteria nor fungi. Has no hemolytic activity. Maximin-S5 has an activity against mycoplasma but has no activity against common Gram-positive and Gram-negative bacteria nor fungi. Has no hemolytic activity. This Bombina maxima (Giant fire-bellied toad) protein is Maximins-S type D.